A 142-amino-acid polypeptide reads, in one-letter code: Hemoglobin subunit alpha-A (142 aa).

The region spanning Val-2–Arg-142 is the Globin domain. His-59 lines the O2 pocket. His-88 is a binding site for heme b.

The protein belongs to the globin family. As to quaternary structure, heterotetramer of two alpha chains and two beta chains. As to expression, red blood cells.

In terms of biological role, involved in oxygen transport from the lung to the various peripheral tissues. The chain is Hemoglobin subunit alpha-A (HBAA) from Coturnix japonica (Japanese quail).